The chain runs to 59 residues: Chromatin protein Cren7 (59 aa).

The protein belongs to the Cren7 family. As to quaternary structure, monomer. Post-translationally, methylated at multiple sites, to varying extents.

It localises to the chromosome. Its subcellular location is the cytoplasm. In terms of biological role, a chromatin protein, binds double-stranded DNA without sequence specificity. Constrains negative DNA supercoils. The chain is Chromatin protein Cren7 from Pyrobaculum arsenaticum (strain DSM 13514 / JCM 11321 / PZ6).